Consider the following 621-residue polypeptide: MLLLPSAADGQGTAITHALTSASTLCQVEPVGRWFEAFVKRRNRNASASFQELEDKKELSEESEDEELQLEEFPMLKTLDPKDWKNQDHYAVLGLGHVRYKATQRQIKAAHKAMVLKHHPDKRKAAGEPIKEGDNDYFTCITKAYEMLSDPVKRRAFNSVDPTFDNSVPSKSEAKDNFFEVFSPVFERNSRWSNKKNVPKLGDMNSSFEDVDAFYSFWYNFDSWREFSYLDEEEKEKAECRDERRWIEKQNRATRAQRKKEEMNRIRTLVDNAYSCDPRIKKFKEEEKAKKEAEKKAKADAKRKEQEAKEKQRQAELEAARLAKEKEEEEVRQQALLAKKEKDIQKKAIKKERQKLRNLCKTWNHFSDSEAERVKMMEEVEKLCDRLELSSLQCLNETLTSSTKEVGKAALEKQIEEINEQIRKEKEEAEARMRQASKNAEKSAGGGGNGSKHWSEDDLQLLIKAVNLFPAGTNSRWEVIANYMNIHSSSGVKRTAKDVIGKAKSLQKLDPHQKDDINKKAFDKFKKEHGVVPQADNATPSERFEGPCTDFTPWTTEEQKLLEQALKTYPVNTPERWEKIAEAVPGRTKKDCMKRYKELVEMVKAKKAAQEQVLNASRGKK.

Position 1 is an N-acetylmethionine (M1). A phosphoserine mark is found at S47, S49, S60, and S63. Positions 88–161 constitute a J domain; that stretch reads DHYAVLGLGH…VKRRAFNSVD (74 aa). Residues 160–250 form a ZRF1-UBD region; sequence VDPTFDNSVP…RDERRWIEKQ (91 aa). A Phosphoserine modification is found at S183. Disordered stretches follow at residues 294 to 315 and 426 to 453; these read EKKA…QRQA and KEEA…GSKH. SANT domains are found at residues 449–511 and 549–604; these read NGSK…KLDP and TDFT…EMVK.

In terms of assembly, component of ribosome-associated complex (RAC), a heterodimer composed of Hsp70/DnaK-type chaperone HSPA14 and Hsp40/DnaJ-type chaperone DNAJC2. Interacts (via ZRF1-UBD region) with ID1. In terms of processing, phosphorylated in M (mitotic) phase.

Its subcellular location is the nucleus. The protein resides in the cytoplasm. The protein localises to the cytosol. In terms of biological role, acts both as a chaperone in the cytosol and as a chromatin regulator in the nucleus. When cytosolic, acts as a molecular chaperone: component of the ribosome-associated complex (RAC), a complex involved in folding or maintaining nascent polypeptides in a folding-competent state. In the RAC complex, stimulates the ATPase activity of the ribosome-associated pool of Hsp70-type chaperones HSPA14 that bind to the nascent polypeptide chain. When nuclear, mediates the switching from polycomb-repressed genes to an active state: specifically recruited at histone H2A ubiquitinated at 'Lys-119' (H2AK119ub), and promotes the displacement of the polycomb PRC1 complex from chromatin, thereby facilitating transcription activation. The sequence is that of DnaJ homolog subfamily C member 2 (DNAJC2) from Bos taurus (Bovine).